Consider the following 202-residue polypeptide: CASP-like protein 1U4 (202 aa).

The Cytoplasmic segment spans residues 1 to 10; that stretch reads MCLPAKWLHP. A helical transmembrane segment spans residues 11 to 31; it reads VSLIFRVAGIGLAAVSAAAML. The Extracellular segment spans residues 32 to 56; the sequence is TASQCTVYADYGWRPRTVTYSDFPA. The helical transmembrane segment at 57–77 threads the bilayer; the sequence is FVYLVAATAIATLLEAVALFL. Residues 78–94 are Cytoplasmic-facing; sequence SWSKKGKSKKSWRVLTM. Residues 95 to 115 form a helical membrane-spanning segment; the sequence is LLLGAVVPALLYTSAGAAFAV. At 116 to 146 the chain is on the extracellular side; that stretch reads GWEDIYYYLEPIGRRFSVCRSSVAGGRFCEH. The chain crosses the membrane as a helical span at residues 147 to 167; it reads VHVSMWLALGAAVAVSFAEFL. Residues 168-202 are Cytoplasmic-facing; the sequence is TTFRWCHGSGSCSDSDSDSDSDSESGCGHGCHCKH.

This sequence belongs to the Casparian strip membrane proteins (CASP) family. In terms of assembly, homodimer and heterodimers.

The protein resides in the cell membrane. The polypeptide is CASP-like protein 1U4 (Sorghum bicolor (Sorghum)).